The following is a 409-amino-acid chain: Elongation factor Tu (409 aa).

Residues 10-214 (KPHVNIGTIG…AVDSYIPTPE (205 aa)) form the tr-type G domain. The segment at 19–26 (GHVDHGKT) is G1. 19–26 (GHVDHGKT) is a GTP binding site. T26 is a Mg(2+) binding site. The G2 stretch occupies residues 60 to 64 (GITIN). A G3 region spans residues 81–84 (DCPG). Residues 81-85 (DCPGH) and 136-139 (NKKD) each bind GTP. The tract at residues 136–139 (NKKD) is G4. Residues 174–176 (SAK) form a G5 region.

This sequence belongs to the TRAFAC class translation factor GTPase superfamily. Classic translation factor GTPase family. EF-Tu/EF-1A subfamily. Monomer.

The protein localises to the cytoplasm. The enzyme catalyses GTP + H2O = GDP + phosphate + H(+). GTP hydrolase that promotes the GTP-dependent binding of aminoacyl-tRNA to the A-site of ribosomes during protein biosynthesis. This chain is Elongation factor Tu, found in Microcystis aeruginosa (strain NIES-843 / IAM M-2473).